Consider the following 479-residue polypeptide: Aspartyl/glutamyl-tRNA(Asn/Gln) amidotransferase subunit B (479 aa).

It belongs to the GatB/GatE family. GatB subfamily. In terms of assembly, heterotrimer of A, B and C subunits.

It catalyses the reaction L-glutamyl-tRNA(Gln) + L-glutamine + ATP + H2O = L-glutaminyl-tRNA(Gln) + L-glutamate + ADP + phosphate + H(+). The enzyme catalyses L-aspartyl-tRNA(Asn) + L-glutamine + ATP + H2O = L-asparaginyl-tRNA(Asn) + L-glutamate + ADP + phosphate + 2 H(+). Allows the formation of correctly charged Asn-tRNA(Asn) or Gln-tRNA(Gln) through the transamidation of misacylated Asp-tRNA(Asn) or Glu-tRNA(Gln) in organisms which lack either or both of asparaginyl-tRNA or glutaminyl-tRNA synthetases. The reaction takes place in the presence of glutamine and ATP through an activated phospho-Asp-tRNA(Asn) or phospho-Glu-tRNA(Gln). This Streptococcus pyogenes serotype M12 (strain MGAS2096) protein is Aspartyl/glutamyl-tRNA(Asn/Gln) amidotransferase subunit B.